A 446-amino-acid chain; its full sequence is Glutamyl-tRNA reductase (446 aa).

Substrate-binding positions include threonine 49–arginine 52, serine 109, glutamate 114–glutamine 116, and glutamine 120. Cysteine 50 functions as the Nucleophile in the catalytic mechanism. NADP(+) is bound at residue glycine 189 to glycine 194.

The protein belongs to the glutamyl-tRNA reductase family. Homodimer.

The enzyme catalyses (S)-4-amino-5-oxopentanoate + tRNA(Glu) + NADP(+) = L-glutamyl-tRNA(Glu) + NADPH + H(+). It participates in porphyrin-containing compound metabolism; protoporphyrin-IX biosynthesis; 5-aminolevulinate from L-glutamyl-tRNA(Glu): step 1/2. Functionally, catalyzes the NADPH-dependent reduction of glutamyl-tRNA(Glu) to glutamate 1-semialdehyde (GSA). This chain is Glutamyl-tRNA reductase, found in Exiguobacterium sibiricum (strain DSM 17290 / CCUG 55495 / CIP 109462 / JCM 13490 / 255-15).